The chain runs to 377 residues: MFRRGGRILNRRIFGAGISAFRVQGRKCASDLSKALASGPKFSDFLKGDKEEQLKPEEAYELEENVVLPNGSVHKRLPSWLKTKVPLGTNFNKIKNDLRGLNLHTVCEEARCPNMGECWGGKDKTRATATIMLMGDTCTRGCRFCSIKTSRKPPPLDPNEPEKTAEAIKRWGLGYVVLTSVDRDDLADAGASHIAKTISLIKSKAPQVLVEALTPDFSGNLDLVSHVAKSGLDVFAHNVETVEELTPFVRDRRANFRQSLRVLKHAKSVSPHLITKTSIMLGLGETDEEIEATLGELRKNEVDVVTFGQYMRPTKRHMKVQAYITPDKFEHWRKRAEELGFLYVASGPLVRSSYKAGEFYLTNILRRRTAAKAQADH.

The N-terminal 77 residues, 1–77, are a transit peptide targeting the mitochondrion; that stretch reads MFRRGGRILN…LPNGSVHKRL (77 aa). [4Fe-4S] cluster is bound by residues C107, C112, C118, C138, C142, C145, and S353. The Radical SAM core domain occupies 123–342; it reads DKTRATATIM…RKRAEELGFL (220 aa).

Belongs to the radical SAM superfamily. Lipoyl synthase family. The cofactor is [4Fe-4S] cluster.

Its subcellular location is the mitochondrion. The catalysed reaction is [[Fe-S] cluster scaffold protein carrying a second [4Fe-4S](2+) cluster] + N(6)-octanoyl-L-lysyl-[protein] + 2 oxidized [2Fe-2S]-[ferredoxin] + 2 S-adenosyl-L-methionine + 4 H(+) = [[Fe-S] cluster scaffold protein] + N(6)-[(R)-dihydrolipoyl]-L-lysyl-[protein] + 4 Fe(3+) + 2 hydrogen sulfide + 2 5'-deoxyadenosine + 2 L-methionine + 2 reduced [2Fe-2S]-[ferredoxin]. It functions in the pathway protein modification; protein lipoylation via endogenous pathway; protein N(6)-(lipoyl)lysine from octanoyl-[acyl-carrier-protein]: step 2/2. Its function is as follows. Catalyzes the radical-mediated insertion of two sulfur atoms into the C-6 and C-8 positions of the octanoyl moiety bound to the lipoyl domains of lipoate-dependent enzymes, thereby converting the octanoylated domains into lipoylated derivatives. This chain is Lipoyl synthase, mitochondrial, found in Schizosaccharomyces japonicus (strain yFS275 / FY16936) (Fission yeast).